The sequence spans 209 residues: Large ribosomal subunit protein uL4 (209 aa).

The interval 44–77 (QRQGTHKSKERSEVSGSTRKLIRQKGGGGARRGD) is disordered.

It belongs to the universal ribosomal protein uL4 family. As to quaternary structure, part of the 50S ribosomal subunit.

Functionally, one of the primary rRNA binding proteins, this protein initially binds near the 5'-end of the 23S rRNA. It is important during the early stages of 50S assembly. It makes multiple contacts with different domains of the 23S rRNA in the assembled 50S subunit and ribosome. Forms part of the polypeptide exit tunnel. The protein is Large ribosomal subunit protein uL4 of Parabacteroides distasonis (strain ATCC 8503 / DSM 20701 / CIP 104284 / JCM 5825 / NCTC 11152).